Here is a 160-residue protein sequence, read N- to C-terminus: Endoribonuclease YbeY (160 aa).

The Zn(2+) site is built by H123, H127, and H133.

Belongs to the endoribonuclease YbeY family. Zn(2+) is required as a cofactor.

It is found in the cytoplasm. In terms of biological role, single strand-specific metallo-endoribonuclease involved in late-stage 70S ribosome quality control and in maturation of the 3' terminus of the 16S rRNA. This chain is Endoribonuclease YbeY, found in Shouchella clausii (strain KSM-K16) (Alkalihalobacillus clausii).